Consider the following 450-residue polypeptide: L-galactonate dehydratase (450 aa).

Lys-221 is an active-site residue. Residues Asp-251, Glu-277, and Glu-306 each contribute to the Mg(2+) site. The active site involves His-356.

Belongs to the mandelate racemase/muconate lactonizing enzyme family. It depends on Mg(2+) as a cofactor.

The catalysed reaction is L-galactonate = 2-dehydro-3-deoxy-L-galactonate + H2O. The protein operates within carbohydrate acid metabolism. Mediates the conversion of L-galactonate to 2-dehydro-3-deoxy-L-galactonate, the second step in D-galacturonate catabolic process. The protein is L-galactonate dehydratase (lgd1) of Hypocrea jecorina (Trichoderma reesei).